The sequence spans 246 residues: UDP-N-acetyl-D-mannosaminuronic acid transferase (246 aa).

This sequence belongs to the glycosyltransferase 26 family.

The catalysed reaction is UDP-N-acetyl-alpha-D-mannosaminouronate + N-acetyl-alpha-D-glucosaminyl-di-trans,octa-cis-undecaprenyl diphosphate = beta-D-ManNAcA-(1-&gt;4)-alpha-D-GlcNAc-di-trans,octa-cis-undecaprenyl diphosphate + UDP + H(+). It functions in the pathway bacterial outer membrane biogenesis; enterobacterial common antigen biosynthesis. Its function is as follows. Catalyzes the synthesis of Und-PP-GlcNAc-ManNAcA (Lipid II), the second lipid-linked intermediate involved in enterobacterial common antigen (ECA) synthesis. The chain is UDP-N-acetyl-D-mannosaminuronic acid transferase from Serratia proteamaculans (strain 568).